A 516-amino-acid polypeptide reads, in one-letter code: L-amino-acid oxidase (516 aa).

The signal sequence occupies residues 1 to 18 (MNVFFMFSLLFLAALGSC). Cysteine 28 and cysteine 191 are oxidised to a cystine. FAD is bound by residues 61–62 (MS), 81–82 (EA), arginine 89, and 105–108 (GPMR). Arginine 108 contacts substrate. An N-linked (GlcNAc...) asparagine glycan is attached at asparagine 190. Residue histidine 241 coordinates substrate. Valine 279 contacts FAD. A disulfide bridge connects residues cysteine 349 and cysteine 430. N-linked (GlcNAc...) asparagine glycosylation occurs at asparagine 379. Tyrosine 390 serves as a coordination point for substrate. FAD-binding positions include glutamate 475, 481–486 (HGWIDS), and 482–487 (GWIDSS). Residues 481 to 482 (HG) and 482 to 483 (GW) each bind substrate.

It belongs to the flavin monoamine oxidase family. FIG1 subfamily. As to quaternary structure, homodimer; non-covalently linked. The cofactor is FAD. N-glycosylated. As to expression, expressed by the venom gland.

It is found in the secreted. The catalysed reaction is an L-alpha-amino acid + O2 + H2O = a 2-oxocarboxylate + H2O2 + NH4(+). In terms of biological role, catalyzes an oxidative deamination of predominantly hydrophobic and aromatic L-amino acids, thus producing hydrogen peroxide that may contribute to the diverse toxic effects of this enzyme. Exhibits diverse biological activities, such as hemorrhage, hemolysis, edema, apoptosis of vascular endothelial cells or tumor cell lines, antibacterial and antiparasitic activities, as well as regulation of platelet aggregation. Effects of snake L-amino oxidases on platelets are controversial, since they either induce aggregation or inhibit agonist-induced aggregation. These different effects are probably due to different experimental conditions. Displays dose-dependent inhibition on HIV-1 infection and replication. The polypeptide is L-amino-acid oxidase (Trimeresurus stejnegeri (Chinese green tree viper)).